A 145-amino-acid polypeptide reads, in one-letter code: Large ribosomal subunit protein uL15 (145 aa).

The span at 1–30 shows a compositional bias: basic residues; sequence MAHSLRKTRKLRGHVSHGHGRIGKHRKHPG. The tract at residues 1–48 is disordered; it reads MAHSLRKTRKLRGHVSHGHGRIGKHRKHPGGRGNAGGQHHHRINRDKY.

This sequence belongs to the universal ribosomal protein uL15 family. Component of the large ribosomal subunit.

Its subcellular location is the cytoplasm. The protein localises to the cytosol. The protein resides in the rough endoplasmic reticulum. In terms of biological role, component of the large ribosomal subunit. This is Large ribosomal subunit protein uL15 (rpl-27a) from Oscheius tipulae.